A 374-amino-acid polypeptide reads, in one-letter code: Isocitrate dehydrogenase [NAD] catalytic subunit 6, mitochondrial (374 aa).

The transit peptide at 1-44 (MTMTAFLARRLIGNGSSQILGTSSSSSGPFISVSRAFFSSSTPI) directs the protein to the mitochondrion. The substrate site is built by arginine 127, arginine 137, arginine 158, and aspartate 245. Aspartate 245, aspartate 269, and aspartate 273 together coordinate Mg(2+).

It belongs to the isocitrate and isopropylmalate dehydrogenases family. As to quaternary structure, heterooligomer of catalytic and regulatory subunits. Requires Mg(2+) as cofactor. Mn(2+) is required as a cofactor. In terms of tissue distribution, ubiquitous. Predominantly expressed in leaves.

Its subcellular location is the mitochondrion. The catalysed reaction is D-threo-isocitrate + NAD(+) = 2-oxoglutarate + CO2 + NADH. Functionally, catalytic subunit of the NAD(+)-dependent isocitrate dehydrogenase involved in the oxidative decarboxylation of isocitrate to 2-oxoglutarate. Performs an essential role in the oxidative function of the citric acid cycle. The protein is Isocitrate dehydrogenase [NAD] catalytic subunit 6, mitochondrial (IDH6) of Arabidopsis thaliana (Mouse-ear cress).